Here is a 199-residue protein sequence, read N- to C-terminus: Inner membrane protein E199L (199 aa).

Asparagine 131 carries N-linked (GlcNAc...) asparagine; by host glycosylation. A helical transmembrane segment spans residues 150–170 (INVMNHPFLTLILIILILIII).

This sequence belongs to the asfivirus E199L family. In terms of assembly, interacts with host PYCR2; this interaction results in autophagy activation. In terms of processing, contains intramolecular disulfide bonds.

The protein localises to the virion membrane. It localises to the host membrane. Essential for viral fusion with host endosomal membrane and core release. Not required for virus morphogenesis and egress. Induces complete autophagy through the interaction with and down-regulation of host PYCR2. The chain is Inner membrane protein E199L from African swine fever virus (isolate Tick/South Africa/Pretoriuskop Pr4/1996) (ASFV).